A 555-amino-acid chain; its full sequence is MDKRHDPSRRIIAPHGTRLSCKSWLTEAPMRMLMNNLHPDVAERPEDLVVYGGIGRAARDWDCYDKIIEVLQRLEDDETLLVQSGKPVGVFRTHADAPRVLIANSNLVPHWANWEHFNELDKLGLAMYGQMTAGSWIYIGTQGIVQGTYETFVSVAKQHFEGISKGKWILTGGLGGMGGAQTLAGTMAGFSVLACEVDETRIDFRLRTRYVDKKATSLDEALAMIEEANQAGKPVSVGLLANAADVFAELVKRGVTPDVVTDQTSAHDPLNGYLPQGWTMAEAAAMRKTDEAGVVKAAKASMAVQVQAMLDLQTAGAATLDYGNNIRQMAFEVGVENAFDFPGFVPAYIRPLFCEGIGPFRWVALSGDPEDIYKTDAKVKELIPDNPHLHNWLDMARERIAFQGLPARICWVGLKDRARLALAFNEMVKNGELSAPVVIGRDHLDSGSVASPNRETESMLDGSDAVSDWPLLNALLNTASGATWVSLHHGGGVGMGFSQHSGVVIVCDGTDAAAKRVGRVLWNDPATGVMRHADAGYEIAKNCAKEQGLDLPMQE.

NAD(+) is bound by residues 52 to 53 (GG), glutamine 130, 176 to 178 (GMG), glutamate 196, arginine 201, 242 to 243 (NA), 263 to 267 (QTSAH), 273 to 274 (YL), and tyrosine 322. Cysteine 410 is an active-site residue. Glycine 492 lines the NAD(+) pocket.

This sequence belongs to the urocanase family. NAD(+) is required as a cofactor.

Its subcellular location is the cytoplasm. It carries out the reaction 4-imidazolone-5-propanoate = trans-urocanate + H2O. The protein operates within amino-acid degradation; L-histidine degradation into L-glutamate; N-formimidoyl-L-glutamate from L-histidine: step 2/3. Catalyzes the conversion of urocanate to 4-imidazolone-5-propionate. The polypeptide is Urocanate hydratase (Shewanella baltica (strain OS223)).